Consider the following 212-residue polypeptide: Pyridoxine/pyridoxamine 5'-phosphate oxidase (212 aa).

Substrate contacts are provided by residues 8–11 (RTNY) and K66. Residues 61 to 66 (RIVLLK), 76 to 77 (FT), K83, and Q105 each bind FMN. Y123, R127, and S131 together coordinate substrate. Residues 140-141 (QS) and W185 each bind FMN. Residue 191 to 193 (RLH) participates in substrate binding. R195 is a binding site for FMN.

Belongs to the pyridoxamine 5'-phosphate oxidase family. Homodimer. FMN is required as a cofactor.

The enzyme catalyses pyridoxamine 5'-phosphate + O2 + H2O = pyridoxal 5'-phosphate + H2O2 + NH4(+). It catalyses the reaction pyridoxine 5'-phosphate + O2 = pyridoxal 5'-phosphate + H2O2. It participates in cofactor metabolism; pyridoxal 5'-phosphate salvage; pyridoxal 5'-phosphate from pyridoxamine 5'-phosphate: step 1/1. Its pathway is cofactor metabolism; pyridoxal 5'-phosphate salvage; pyridoxal 5'-phosphate from pyridoxine 5'-phosphate: step 1/1. Its function is as follows. Catalyzes the oxidation of either pyridoxine 5'-phosphate (PNP) or pyridoxamine 5'-phosphate (PMP) into pyridoxal 5'-phosphate (PLP). This chain is Pyridoxine/pyridoxamine 5'-phosphate oxidase, found in Leptospira biflexa serovar Patoc (strain Patoc 1 / Ames).